The chain runs to 994 residues: Alanine--tRNA ligase, chloroplastic/mitochondrial (994 aa).

Residues Met1–Ser29 are disordered. Zn(2+) is bound by residues His672, His676, Cys774, and His778.

Belongs to the class-II aminoacyl-tRNA synthetase family. In terms of assembly, monomer. Zn(2+) serves as cofactor.

It localises to the plastid. The protein localises to the chloroplast. The protein resides in the mitochondrion. The catalysed reaction is tRNA(Ala) + L-alanine + ATP = L-alanyl-tRNA(Ala) + AMP + diphosphate. In terms of biological role, catalyzes the attachment of alanine to tRNA(Ala) in a two-step reaction: alanine is first activated by ATP to form Ala-AMP and then transferred to the acceptor end of tRNA(Ala). Also edits incorrectly charged tRNA(Ala) via its editing domain. The polypeptide is Alanine--tRNA ligase, chloroplastic/mitochondrial (Populus trichocarpa (Western balsam poplar)).